The sequence spans 233 residues: Lipoprotein-releasing system ATP-binding protein LolD (233 aa).

The region spanning leucine 6–glutamate 233 is the ABC transporter domain. Residue glycine 42 to serine 49 participates in ATP binding.

Belongs to the ABC transporter superfamily. Lipoprotein translocase (TC 3.A.1.125) family. As to quaternary structure, the complex is composed of two ATP-binding proteins (LolD) and two transmembrane proteins (LolC and LolE).

The protein resides in the cell inner membrane. Its function is as follows. Part of the ABC transporter complex LolCDE involved in the translocation of mature outer membrane-directed lipoproteins, from the inner membrane to the periplasmic chaperone, LolA. Responsible for the formation of the LolA-lipoprotein complex in an ATP-dependent manner. In Shigella flexneri, this protein is Lipoprotein-releasing system ATP-binding protein LolD.